The primary structure comprises 755 residues: Cartilage oligomeric matrix protein (755 aa).

Positions methionine 1–glycine 19 are cleaved as a signal peptide. Residues glycine 21–arginine 84 are COMP N-terminal. One can recognise an EGF-like 1 domain in the interval proline 85–threonine 124. Cystine bridges form between cysteine 89-cysteine 100, cysteine 94-cysteine 109, cysteine 112-cysteine 123, cysteine 129-cysteine 140, cysteine 134-cysteine 149, cysteine 152-cysteine 176, cysteine 182-cysteine 195, cysteine 189-cysteine 204, cysteine 207-cysteine 219, cysteine 227-cysteine 241, cysteine 235-cysteine 251, cysteine 253-cysteine 264, cysteine 280-cysteine 285, cysteine 290-cysteine 310, cysteine 326-cysteine 346, cysteine 349-cysteine 369, cysteine 385-cysteine 405, cysteine 408-cysteine 428, cysteine 446-cysteine 466, cysteine 482-cysteine 502, and cysteine 518-cysteine 739. An N-linked (GlcNAc...) asparagine glycan is attached at asparagine 119. The 53-residue stretch at aspartate 125–threonine 177 folds into the EGF-like 2; calcium-binding domain. The EGF-like 3; calcium-binding domain occupies aspartate 178–glutamine 220. One can recognise an EGF-like 4 domain in the interval glycine 223 to glycine 265. TSP type-3 repeat units lie at residues arginine 266–glutamine 298, glutamate 299–glutamine 334, arginine 335–glutamine 357, lysine 358–glutamine 393, serine 394–glutamine 416, arginine 417–glutamine 454, glutamine 455–glutamine 490, and glutamate 491–leucine 526. The segment at asparagine 295–alanine 501 is disordered. Composition is skewed to basic and acidic residues over residues proline 332–aspartate 344 and arginine 350–glutamine 365. Serine 394 carries the post-translational modification Phosphoserine. 2 stretches are compositionally biased toward basic and acidic residues: residues aspartate 412–valine 424 and aspartate 456–alanine 465. The tract at residues threonine 525–alanine 755 is mediates cell survival and induction of the IAP family of survival proteins. The TSP C-terminal domain maps to arginine 530 to proline 744. Asparagine 740 carries N-linked (GlcNAc...) asparagine glycosylation.

The protein belongs to the thrombospondin family. As to quaternary structure, pentamer; disulfide-linked. Exists in a more compact conformation in the presence of calcium and shows a more extended conformation in the absence of calcium. Interacts with ITGB3, ITGA5 and FN1. Binding to FN1 requires the presence of divalent cations (Ca(2+), Mg(2+) or Mn(2+)). The greatest amount of binding is seen in the presence of Mn(2+). Interacts with MATN1, MATN3, MATN4 and ACAN. Binds heparin, heparan sulfate and chondroitin sulfate. EDTA dimishes significantly its binding to ACAN and abolishes its binding to MATN3, MATN4 and chondroitin sulfate. Interacts with collagen I, II and IX, and interaction with these collagens is dependent on the presence of zinc ions. Interacts with ADAMTS12. Interacts with ITGA7. Requires Ca(2+) as cofactor. Post-translationally, proteolytically cleaved by metalloproteases ADAMTS4 and ADAMTS1 with ADAMTS4 showing more potent activity.

Its subcellular location is the secreted. The protein localises to the extracellular space. The protein resides in the extracellular matrix. Functionally, plays a role in the structural integrity of cartilage via its interaction with other extracellular matrix proteins such as the collagens and fibronectin. Can mediate the interaction of chondrocytes with the cartilage extracellular matrix through interaction with cell surface integrin receptors. Could play a role in the pathogenesis of osteoarthritis. Potent suppressor of apoptosis in both primary chondrocytes and transformed cells. Suppresses apoptosis by blocking the activation of caspase-3 and by inducing the IAP family of survival proteins (BIRC3, BIRC2, BIRC5 and XIAP). Essential for maintaining a vascular smooth muscle cells (VSMCs) contractile/differentiated phenotype under physiological and pathological stimuli. Maintains this phenotype of VSMCs by interacting with ITGA7. This Rattus norvegicus (Rat) protein is Cartilage oligomeric matrix protein.